The primary structure comprises 83 residues: UPF0297 protein LEUM_0557 (83 aa).

The protein belongs to the UPF0297 family.

The chain is UPF0297 protein LEUM_0557 from Leuconostoc mesenteroides subsp. mesenteroides (strain ATCC 8293 / DSM 20343 / BCRC 11652 / CCM 1803 / JCM 6124 / NCDO 523 / NBRC 100496 / NCIMB 8023 / NCTC 12954 / NRRL B-1118 / 37Y).